Here is a 155-residue protein sequence, read N- to C-terminus: uncharacterized protein (155 aa).

4 helical membrane passes run T2–F24, A62–L84, V97–V116, and V131–N148.

Its subcellular location is the cell membrane. This is an uncharacterized protein from Aquifex aeolicus (strain VF5).